The sequence spans 272 residues: Acetylglutamate kinase (272 aa).

Residues 41–42 (GG), Arg63, and Asn166 each bind substrate.

It belongs to the acetylglutamate kinase family. ArgB subfamily.

It is found in the cytoplasm. It carries out the reaction N-acetyl-L-glutamate + ATP = N-acetyl-L-glutamyl 5-phosphate + ADP. It participates in amino-acid biosynthesis; L-arginine biosynthesis; N(2)-acetyl-L-ornithine from L-glutamate: step 2/4. In terms of biological role, catalyzes the ATP-dependent phosphorylation of N-acetyl-L-glutamate. The sequence is that of Acetylglutamate kinase from Anaeromyxobacter sp. (strain K).